The sequence spans 208 residues: Large ribosomal subunit protein uL4 (208 aa).

Residues 44-79 (QRQGTHKSKERSEISGSTRKIGRQKGGGGARRGDMN) form a disordered region.

Belongs to the universal ribosomal protein uL4 family. In terms of assembly, part of the 50S ribosomal subunit.

In terms of biological role, one of the primary rRNA binding proteins, this protein initially binds near the 5'-end of the 23S rRNA. It is important during the early stages of 50S assembly. It makes multiple contacts with different domains of the 23S rRNA in the assembled 50S subunit and ribosome. Its function is as follows. Forms part of the polypeptide exit tunnel. The chain is Large ribosomal subunit protein uL4 from Bacteroides thetaiotaomicron (strain ATCC 29148 / DSM 2079 / JCM 5827 / CCUG 10774 / NCTC 10582 / VPI-5482 / E50).